The primary structure comprises 141 residues: Large ribosomal subunit protein uL11 (141 aa).

This sequence belongs to the universal ribosomal protein uL11 family. Part of the ribosomal stalk of the 50S ribosomal subunit. Interacts with L10 and the large rRNA to form the base of the stalk. L10 forms an elongated spine to which L12 dimers bind in a sequential fashion forming a multimeric L10(L12)X complex. In terms of processing, one or more lysine residues are methylated.

Functionally, forms part of the ribosomal stalk which helps the ribosome interact with GTP-bound translation factors. This Acaryochloris marina (strain MBIC 11017) protein is Large ribosomal subunit protein uL11.